We begin with the raw amino-acid sequence, 450 residues long: Citrate/malate-proton symporter (450 aa).

The Cytoplasmic portion of the chain corresponds to 1–32 (MGELQTHMQLQTDTIHEGVRKENWFAKAMNIK). A helical transmembrane segment spans residues 33–53 (VGIIPLPVYALLFILITVFVM). Residues 54–64 (HHDVKSDILTS) lie on the Extracellular side of the membrane. The helical transmembrane segment at 65–85 (IAVMAFFGFTFAQIGKSIPIV) threads the bilayer. Residues 86 to 87 (RS) are Cytoplasmic-facing. A helical membrane pass occupies residues 88–108 (IGGPAILATFIPSAVVYYHLL). At 109-118 (PNDIVKSTTE) the chain is on the extracellular side. Residues 119–139 (FTENSNFLYLFIAGIVVGSIL) traverse the membrane as a helical segment. Residues 140-152 (GMKRETLVKAFMK) lie on the Cytoplasmic side of the membrane. The helical transmembrane segment at 153-173 (IFIPLIVGSVTAAIVGLAVGT) threads the bilayer. Topologically, residues 174–217 (LLGLGFQHTLLYIVIPIMAGGVGEGAIPLSIGYSDIMPISQGEA) are extracellular. Residues 218–238 (FALVLPSIMLGSLCAIILAGL) traverse the membrane as a helical segment. The Cytoplasmic segment spans residues 239–273 (LNRIGKKKPEWTGNGKVDRSEEESPALEESQSGQQ). Residues 249–268 (WTGNGKVDRSEEESPALEES) form a disordered region. A helical transmembrane segment spans residues 274 to 294 (MFNLSLFASGGILAVSLYLVG). A topological domain (extracellular) is located at residue methionine 295. Residues 296 to 316 (LAHDFFGFPAPVAMLLLAVLI) form a helical membrane-spanning segment. The Cytoplasmic portion of the chain corresponds to 317-335 (KLFRLVPASIENGAFGVSR). A helical transmembrane segment spans residues 336 to 356 (FFSTAVTYPLLFAIGVSMTPW). The Extracellular segment spans residues 357 to 364 (DKLVAAFN). A helical transmembrane segment spans residues 365-385 (LSNIITILSVVVTMMAVGFFT). Residues 386-428 (GKWLNMYPIETAIINACHSGQGGTGDVAILSAAERLELMPFAQ) lie on the Cytoplasmic side of the membrane. A helical transmembrane segment spans residues 429 to 446 (VSTRIGGAITVSLTLLLL). At 447 to 450 (HQFY) the chain is on the extracellular side.

Belongs to the 2-hydroxycarboxylate transporter (2-HCT) (TC 2.A.24) family.

It is found in the cell membrane. It catalyses the reaction citrate(in) + 3 H(+)(in) = citrate(out) + 3 H(+)(out). The catalysed reaction is (S)-malate(in) + 2 H(+)(in) = (S)-malate(out) + 2 H(+)(out). The uptake activity is inhibited by divalent metal ions such as Ca(2+), Mg(2+) and Ni(2+). In terms of biological role, proton motive force-driven secondary transporter that catalyzes the uptake of both citrate and malate. Is an electroneutral proton-solute symporter: the number of protons transported is equal to the valence of the transported anions. Translocates the free citrate and malate anions. Citramalate binds to the transporter, but it is not translocated. Is strictly stereoselective, recognizing only the (S)-enantiomers of malate and citramalate. The sequence is that of Citrate/malate-proton symporter from Bacillus subtilis (strain 168).